A 251-amino-acid chain; its full sequence is Small ribosomal subunit protein uS3 (251 aa).

The 71-residue stretch at 39-109 (IRNYVLARLK…EVKIDVVEVI (71 aa)) folds into the KH type-2 domain. Positions 221–239 (EMKRMKDRRADSKSRPRDP) are enriched in basic and acidic residues. Positions 221-251 (EMKRMKDRRADSKSRPRDPRSKRRRSRTKRA) are disordered. The segment covering 240–251 (RSKRRRSRTKRA) has biased composition (basic residues).

The protein belongs to the universal ribosomal protein uS3 family. In terms of assembly, part of the 30S ribosomal subunit. Forms a tight complex with proteins S10 and S14.

Functionally, binds the lower part of the 30S subunit head. Binds mRNA in the 70S ribosome, positioning it for translation. The sequence is that of Small ribosomal subunit protein uS3 from Chlorobium limicola (strain DSM 245 / NBRC 103803 / 6330).